The following is a 628-amino-acid chain: Huntingtin-associated protein 1 (628 aa).

Disordered stretches follow at residues 1-62 (MRPK…TKTG) and 212-264 (YSDS…AHRC). Residues 32 to 44 (GPAPEPSAEPKPA) are compositionally biased toward pro residues. A compositionally biased stretch (polar residues) spans 52–62 (GQKSGSRTKTG). The HAP1 N-terminal domain maps to 79–403 (RYVFQGPYGP…EDGKSHRQRS (325 aa)). The interval 152 to 319 (LLEEKERDLN…SEASQQMAEL (168 aa)) is sufficient for interaction with KIF5B. Residues 157–261 (ERDLNTAARI…PKPHPKAETA (105 aa)) are interaction with TBP. Coiled coils occupy residues 168-301 (QSLV…EQML) and 327-367 (LEGY…MLAS). Residues 214–235 (DSDDDDDEEDEEDEEEGEEEER) show a composition bias toward acidic residues. Residues 236–248 (EGQRDQDQQHDHP) show a composition bias toward basic and acidic residues. Residues 276–444 (LLEEENDHLR…TSLRKFITDP (169 aa)) form a sufficient for self-association and interaction with HD region. 3 disordered regions span residues 372–411 (HSES…GSVT), 451–529 (RDTH…VDET), and 562–628 (QDAH…SGAT). 2 stretches are compositionally biased toward basic and acidic residues: residues 387–398 (SRPRDRQEDGKS) and 451–464 (RDTH…KEQR). Residues 473-582 (DLKPPEDFEA…KVVPKDSPTP (110 aa)) are interaction with TBP. Acidic residues-rich tracts occupy residues 479–494 (DFEA…ELGA) and 504–527 (GQAE…PEVD). Arginine 598 carries the post-translational modification Phosphothreonine. A compositionally biased stretch (basic and acidic residues) spans 605–622 (QRLEEDRATHSPSAREEE).

In terms of assembly, self-associates. Interacts with HTT/huntingtin; enhanced by an expanded polyglutamine repeat within HTT. Isoform A interacts with DCTN1; decreased in presence of HTT with expanded polyglutamine repeat; decreased by phosphorylation of Hap1 isoform A at Thr-598. Isoform A interacts with KLC2; decreased by phosphorylation of Hap1 isoform A at Thr-598. Isoform A interacts with ITPR1 and APP. Isoform A interacts with AR; decreased by an expanded polyglutamine repeat within AR. Isoform A interacts with YWHAZ; enhanced by phosphorylation of Hap1 isoform A at Thr-598. Isoform A interacts with BDNF and SORT1; probably forming a complex involved in proBDNF trafficking, degradation and processing. Interacts with TBP, AHI1, HGS and KALRN. Interacts with KIF5A, KIF5B, KIF5C and GABRB3; indicative for an HAP1:KIF5 complex transporting a GABA(A) receptor as cargo. Interacts with ATXN3; in STBs. Interacts with NTRK2; HAP1 stabilizes association of NTRK2 with SORT1 preventing NTRK2 degradation. Interacts with CFAP263. Isoform A is phosphorylated on Thr-598.

It is found in the cytoplasm. Its subcellular location is the presynapse. The protein localises to the cytoskeleton. It localises to the cell projection. The protein resides in the dendritic spine. It is found in the dendrite. Its subcellular location is the axon. The protein localises to the lysosome. It localises to the endoplasmic reticulum. The protein resides in the mitochondrion. It is found in the nucleus. Its subcellular location is the cytoplasmic vesicle. The protein localises to the autophagosome. It localises to the early endosome. The protein resides in the growth cone. It is found in the neuron projection. Its subcellular location is the secretory vesicle. The protein localises to the synaptic vesicle. Its function is as follows. Originally identified as neuronal protein that specifically associates with HTT/huntingtin and the binding is enhanced by an expanded polyglutamine repeat within HTT possibly affecting HAP1 interaction properties. Both HTT and HAP1 are involved in intracellular trafficking and HAP1 is proposed to link HTT to motor proteins and/or transport cargos. Seems to play a role in vesicular transport within neurons and axons such as from early endosomes to late endocytic compartments and to promote neurite outgrowth. The vesicular transport function via association with microtubule-dependent transporters can be attenuated by association with mutant HTT. Involved in the axonal transport of BDNF and its activity-dependent secretion; the function seems to involve HTT, DCTN1 and a complex with SORT1. Involved in APP trafficking and seems to facilitate APP anterograde transport and membrane insertion thereby possibly reducing processing into amyloid beta. Involved in delivery of gamma-aminobutyric acid (GABA(A)) receptors to synapses; the function is dependent on kinesin motor protein KIF5 and is disrupted by HTT with expanded polyglutamine repeat. Involved in regulation of autophagosome motility by promoting efficient retrograde axonal transport. Seems to be involved in regulation of membrane receptor recycling and degradation, and respective signal transduction, including GABA(A) receptors, tyrosine kinase receptors, EGFR, IP3 receptor and androgen receptor. Among others suggested to be involved in control of feeding behavior (involving hypothalamic GABA(A) receptors), cerebellar and brainstem development (involving AHI1 and NTRK1/TrkA), postnatal neurogenesis (involving hypothalamic NTRK2/TrkB regulating the number of Npyr1-expressing cells), and ITPR1/InsP3R1-mediated Ca(2+) release (involving HTT and possibly the effect of mutant HTT). Via association with DCTN1/dynactin p150-glued and HTT/huntingtin involved in cytoplasmic retention of REST in neurons. May be involved in ciliogenesiss; however, reports are conflicting: PubMed:21985783 reports that Hap1 is required for ciliogenesis in primary cortical neurons and proposes that HTT interacts with PCM1 through HAP1; PubMed:23532844 reports that mice with disrupted Hap1 display normal cilium formation and function. Involved in regulation of exocytosis. Isoform A but not isoform B seems to be involved in formation of cytoplasmic inclusion bodies (STBs). In case of anomalous expression of TBP, can sequester a subset of TBP into STBs; sequestration is enhanced by an expanded polyglutamine repeat within TBP. The sequence is that of Huntingtin-associated protein 1 (Hap1) from Mus musculus (Mouse).